Consider the following 162-residue polypeptide: Phosphopantetheine adenylyltransferase (162 aa).

Residue Thr10 coordinates substrate. ATP is bound by residues 10-11 and His18; that span reads TF. Lys42, Met74, and Arg88 together coordinate substrate. ATP contacts are provided by residues 89-91, Glu99, and 124-130; these read GLR and YAFLSST.

Belongs to the bacterial CoaD family. Homohexamer. Requires Mg(2+) as cofactor.

It localises to the cytoplasm. It catalyses the reaction (R)-4'-phosphopantetheine + ATP + H(+) = 3'-dephospho-CoA + diphosphate. The protein operates within cofactor biosynthesis; coenzyme A biosynthesis; CoA from (R)-pantothenate: step 4/5. Functionally, reversibly transfers an adenylyl group from ATP to 4'-phosphopantetheine, yielding dephospho-CoA (dPCoA) and pyrophosphate. The polypeptide is Phosphopantetheine adenylyltransferase (Aliivibrio salmonicida (strain LFI1238) (Vibrio salmonicida (strain LFI1238))).